A 242-amino-acid polypeptide reads, in one-letter code: Coat protein (242 aa).

Pro residues predominate over residues 1-16 (MGDQPRPPVPPAPGSN). 2 disordered regions span residues 1 to 41 (MGDQ…VANQ) and 219 to 242 (SNST…GPDA). Polar residues predominate over residues 219–232 (SNSTLLTKGASRST).

The protein belongs to the potexvirus capsid protein family.

The protein localises to the virion. Functionally, required for genome encapsidation. Forms ribonucleoprotein complexes along with TGB1 helicase and viral RNA. The chain is Coat protein from Strawberry mild yellow edge-associated virus (SMYEaV).